Consider the following 253-residue polypeptide: Triosephosphate isomerase (253 aa).

Substrate is bound at residue 8 to 10; it reads NWK. Histidine 93 acts as the Electrophile in catalysis. Glutamate 165 acts as the Proton acceptor in catalysis. Residues glycine 171, serine 210, and 231–232 contribute to the substrate site; that span reads GG.

It belongs to the triosephosphate isomerase family. As to quaternary structure, homodimer.

It is found in the cytoplasm. It catalyses the reaction D-glyceraldehyde 3-phosphate = dihydroxyacetone phosphate. Its pathway is carbohydrate biosynthesis; gluconeogenesis. The protein operates within carbohydrate degradation; glycolysis; D-glyceraldehyde 3-phosphate from glycerone phosphate: step 1/1. In terms of biological role, involved in the gluconeogenesis. Catalyzes stereospecifically the conversion of dihydroxyacetone phosphate (DHAP) to D-glyceraldehyde-3-phosphate (G3P). The chain is Triosephosphate isomerase from Francisella tularensis subsp. holarctica (strain FTNF002-00 / FTA).